We begin with the raw amino-acid sequence, 626 residues long: Lipoprotein LpqB (626 aa).

The N-terminal stretch at 1 to 23 (MIGQANRIAAAVSTACLAVLLAG) is a signal peptide. Cys24 carries N-palmitoyl cysteine lipidation. Residue Cys24 is the site of S-diacylglycerol cysteine attachment. A disordered region spans residues 428–457 (EAEREEDLADDTEPGDTAVGSTERRETDRG). Residues 430–441 (EREEDLADDTEP) are compositionally biased toward acidic residues.

Belongs to the LpqB lipoprotein family.

The protein resides in the cell membrane. The chain is Lipoprotein LpqB from Thermobifida fusca (strain YX).